A 192-amino-acid polypeptide reads, in one-letter code: Probable Brix domain-containing ribosomal biogenesis protein (192 aa).

The 190-residue stretch at 2 to 191 (RPAAITTSQR…DFRTKDERMK (190 aa)) folds into the Brix domain.

In terms of biological role, probably involved in the biogenesis of the ribosome. The sequence is that of Probable Brix domain-containing ribosomal biogenesis protein from Methanopyrus kandleri (strain AV19 / DSM 6324 / JCM 9639 / NBRC 100938).